Reading from the N-terminus, the 623-residue chain is Leucine aminopeptidase 2 (623 aa).

A peptide-binding positions include 140–142 (QLE) and 266–271 (PYGGME). His-295 contributes to the Zn(2+) binding site. Catalysis depends on Glu-296, which acts as the Proton acceptor. Residues His-299 and Glu-318 each contribute to the Zn(2+) site. Tyr-382 functions as the Proton donor in the catalytic mechanism.

Belongs to the peptidase M1 family. Zn(2+) serves as cofactor.

The protein resides in the cytoplasm. It localises to the nucleus. It carries out the reaction an epoxide + H2O = an ethanediol. Its function is as follows. Aminopeptidase that preferentially cleaves di- and tripeptides. Also has low epoxide hydrolase activity (in vitro). Can hydrolyze the epoxide leukotriene LTA(4) but it forms preferentially 5,6-dihydroxy-7,9,11,14-eicosatetraenoic acid rather than the cytokine leukotriene B(4) as the product compared to the homologous mammalian enzyme (in vitro). This is Leucine aminopeptidase 2 from Eremothecium gossypii (strain ATCC 10895 / CBS 109.51 / FGSC 9923 / NRRL Y-1056) (Yeast).